The chain runs to 538 residues: Pentachlorophenol 4-monooxygenase (538 aa).

Residues 16–45 (AVLI…MIDR) and 288–298 (YRKGNVFLAGD) contribute to the FAD site.

This sequence belongs to the PheA/TfdB FAD monooxygenase family. As to quaternary structure, homodimer. FAD serves as cofactor.

The catalysed reaction is pentachlorophenol + NADPH + O2 + H(+) = 2,3,5,6-tetrachloro-1,4-benzoquinone + chloride + NADP(+) + H2O. It carries out the reaction 2,3,5,6-tetrachlorophenol + NADPH + O2 = 2,3,5,6-tetrachlorohydroquinone + NADP(+) + H2O. It functions in the pathway xenobiotic degradation; pentachlorophenol degradation. Dechlorination of pentachlorophenol to tetrachlorobenzoquinone. Also removes hydrogen and nitro, amino, and cyano groups from benzene ring at the para position in relation to the hydroxyl of phenol. The sequence is that of Pentachlorophenol 4-monooxygenase (pcpB) from Sphingobium chlorophenolicum.